We begin with the raw amino-acid sequence, 404 residues long: Propionate kinase (404 aa).

This sequence belongs to the acetokinase family. PduW subfamily.

It is found in the cytoplasm. The catalysed reaction is propanoate + ATP = propanoyl phosphate + ADP. It functions in the pathway polyol metabolism; 1,2-propanediol degradation. Its function is as follows. Works with phosphate acetyltransferase (pta) to capture exogenous propionate and regenerate propionyl-CoA during degradation of 1,2-propanediol (1,2-PD). This chain is Propionate kinase, found in Citrobacter koseri (strain ATCC BAA-895 / CDC 4225-83 / SGSC4696).